A 644-amino-acid polypeptide reads, in one-letter code: Threonine--tRNA ligase (644 aa).

The TGS domain occupies 1–61; that stretch reads MNVTIEGQVF…ADTTTIEPVF (61 aa). Residues 241–532 form a catalytic region; that stretch reads DHRKLGQQLD…LTEHFAGAFP (292 aa). C333, H384, and H509 together coordinate Zn(2+).

It belongs to the class-II aminoacyl-tRNA synthetase family. In terms of assembly, homodimer. Zn(2+) serves as cofactor.

It is found in the cytoplasm. The enzyme catalyses tRNA(Thr) + L-threonine + ATP = L-threonyl-tRNA(Thr) + AMP + diphosphate + H(+). Catalyzes the attachment of threonine to tRNA(Thr) in a two-step reaction: L-threonine is first activated by ATP to form Thr-AMP and then transferred to the acceptor end of tRNA(Thr). Also edits incorrectly charged L-seryl-tRNA(Thr). The protein is Threonine--tRNA ligase of Nitratidesulfovibrio vulgaris (strain DSM 19637 / Miyazaki F) (Desulfovibrio vulgaris).